Reading from the N-terminus, the 357-residue chain is Peptide chain release factor 1 (357 aa).

Gln234 carries the N5-methylglutamine modification.

The protein belongs to the prokaryotic/mitochondrial release factor family. Post-translationally, methylated by PrmC. Methylation increases the termination efficiency of RF1.

The protein resides in the cytoplasm. Peptide chain release factor 1 directs the termination of translation in response to the peptide chain termination codons UAG and UAA. This chain is Peptide chain release factor 1, found in Frankia casuarinae (strain DSM 45818 / CECT 9043 / HFP020203 / CcI3).